The primary structure comprises 397 residues: CCA-adding enzyme (397 aa).

Residues glycine 26 and arginine 29 each contribute to the ATP site. The CTP site is built by glycine 26 and arginine 29. Mg(2+) is bound by residues aspartate 39 and aspartate 41. ATP contacts are provided by arginine 110, aspartate 153, arginine 156, arginine 159, and arginine 162. 5 residues coordinate CTP: arginine 110, aspartate 153, arginine 156, arginine 159, and arginine 162.

The protein belongs to the tRNA nucleotidyltransferase/poly(A) polymerase family. Bacterial CCA-adding enzyme type 3 subfamily. In terms of assembly, homodimer. The cofactor is Mg(2+).

The catalysed reaction is a tRNA precursor + 2 CTP + ATP = a tRNA with a 3' CCA end + 3 diphosphate. It catalyses the reaction a tRNA with a 3' CCA end + 2 CTP + ATP = a tRNA with a 3' CCACCA end + 3 diphosphate. In terms of biological role, catalyzes the addition and repair of the essential 3'-terminal CCA sequence in tRNAs without using a nucleic acid template. Adds these three nucleotides in the order of C, C, and A to the tRNA nucleotide-73, using CTP and ATP as substrates and producing inorganic pyrophosphate. tRNA 3'-terminal CCA addition is required both for tRNA processing and repair. Also involved in tRNA surveillance by mediating tandem CCA addition to generate a CCACCA at the 3' terminus of unstable tRNAs. While stable tRNAs receive only 3'-terminal CCA, unstable tRNAs are marked with CCACCA and rapidly degraded. The chain is CCA-adding enzyme from Bacillus mycoides (strain KBAB4) (Bacillus weihenstephanensis).